A 391-amino-acid chain; its full sequence is 3-ketoacyl-CoA thiolase (391 aa).

Catalysis depends on C95, which acts as the Acyl-thioester intermediate. Catalysis depends on proton acceptor residues H347 and C377.

Belongs to the thiolase-like superfamily. Thiolase family. Heterotetramer of two alpha chains (FadB) and two beta chains (FadA).

The protein resides in the cytoplasm. The enzyme catalyses an acyl-CoA + acetyl-CoA = a 3-oxoacyl-CoA + CoA. It functions in the pathway lipid metabolism; fatty acid beta-oxidation. Functionally, catalyzes the final step of fatty acid oxidation in which acetyl-CoA is released and the CoA ester of a fatty acid two carbons shorter is formed. The polypeptide is 3-ketoacyl-CoA thiolase (Pseudomonas fragi).